Consider the following 370-residue polypeptide: Aminomethyltransferase (370 aa).

It belongs to the GcvT family. In terms of assembly, the glycine cleavage system is composed of four proteins: P, T, L and H.

The enzyme catalyses N(6)-[(R)-S(8)-aminomethyldihydrolipoyl]-L-lysyl-[protein] + (6S)-5,6,7,8-tetrahydrofolate = N(6)-[(R)-dihydrolipoyl]-L-lysyl-[protein] + (6R)-5,10-methylene-5,6,7,8-tetrahydrofolate + NH4(+). Functionally, the glycine cleavage system catalyzes the degradation of glycine. The sequence is that of Aminomethyltransferase from Stenotrophomonas maltophilia (strain K279a).